The sequence spans 74 residues: U19-theraphotoxin-Cg1a (74 aa).

A signal peptide spans 1-7 (IMFVWAS). The propeptide occupies 8–36 (AAEVEERGSDQRDSPASLKSMETIFQSEQ). Disulfide bonds link Cys39-Cys53, Cys46-Cys58, and Cys52-Cys66.

Belongs to the neurotoxin 10 (Hwtx-1) family. 38 (Jztx-33) subfamily. In terms of tissue distribution, expressed by the venom gland.

It localises to the secreted. In terms of biological role, probable ion channel inhibitor. The protein is U19-theraphotoxin-Cg1a of Chilobrachys guangxiensis (Chinese earth tiger tarantula).